The chain runs to 377 residues: Mucin-7 (377 aa).

Residues 1–22 form the signal peptide; that stretch reads MKTLPLFVCICALSACFSFSEG. The tract at residues 70–100 is disordered; it reads CRPKLPPSPNNPPKFPNPHQPPKHPDKNSSV. A compositionally biased stretch (pro residues) spans 73 to 89; that stretch reads KLPPSPNNPPKFPNPHQ. N-linked (GlcNAc...) asparagine glycosylation is found at Asn97, Asn128, Asn135, and Asn146. The segment at 150–355 is disordered; sequence SVATLAPVNS…QPTSAPGQNK (206 aa). A run of 6 repeats spans residues 165 to 187, 188 to 210, 211 to 233, 234 to 256, 257 to 279, and 280 to 302. Residues 169–183 are compositionally biased toward pro residues; sequence PPTPSATTPAPPSSS. A glycan (O-linked (GalNAc) threonine; by GALNT13) is linked at Thr176. Residues Ser182 and Ser183 are each glycosylated (O-linked (GalNAc) serine; by GALNT13). Over residues 184–214 the composition is skewed to low complexity; sequence APPETTAAPPTPSATTQAPPSSSAPPETTAA. O-linked (GalNAc) threonine; by GALNT13 glycans are attached at residues Thr188 and Thr189. The segment covering 215 to 229 has biased composition (pro residues); that stretch reads PPTPPATTPAPPSSS. Over residues 230–283 the composition is skewed to low complexity; that stretch reads APPETTAAPPTPSATTPAPLSSSAPPETTAVPPTPSATTLDPSSASAPPETTAA. Pro residues predominate over residues 284-298; sequence PPTPSATTPAPPSSP. Residues 309–329 show a composition bias toward polar residues; it reads TTPNSSPTTLAPDTSETSAAP. Low complexity predominate over residues 330-348; sequence THQTTTSVTTQTTTTKQPT.

Monomer. Post-translationally, N- and O-glycosylated. Contains fucose, mannose, galactose, N-acetylglucosamine and N-acetylgalactosamine. Expressed in salivary gland tissues and only in those that contain mucous acinar cells (e.g. sublingual and submandibular glands) and not in salivary glands containing only serous acinar cells (e.g. parotid gland).

The protein resides in the secreted. Functionally, may function in a protective capacity by promoting the clearance of bacteria in the oral cavity and aiding in mastication, speech, and swallowing. Binds P.aeruginosa pili. The chain is Mucin-7 (MUC7) from Homo sapiens (Human).